A 419-amino-acid chain; its full sequence is Pyrophosphate--fructose 6-phosphate 1-phosphotransferase (419 aa).

Glycine 13 lines the diphosphate pocket. Residues 142–144 (TVD), 190–192 (MGR), glutamate 247, and 297–300 (YLQR) each bind substrate. Residue aspartate 144 is the Proton acceptor of the active site.

It belongs to the phosphofructokinase type A (PFKA) family. PPi-dependent PFK group II subfamily. Clade 'B2' sub-subfamily. As to quaternary structure, homodimer. The cofactor is Mg(2+).

The protein localises to the cytoplasm. It carries out the reaction beta-D-fructose 6-phosphate + diphosphate = beta-D-fructose 1,6-bisphosphate + phosphate + H(+). It participates in carbohydrate degradation; glycolysis; D-glyceraldehyde 3-phosphate and glycerone phosphate from D-glucose: step 3/4. With respect to regulation, non-allosteric. Catalyzes the phosphorylation of D-fructose 6-phosphate, the first committing step of glycolysis. Uses inorganic phosphate (PPi) as phosphoryl donor instead of ATP like common ATP-dependent phosphofructokinases (ATP-PFKs), which renders the reaction reversible, and can thus function both in glycolysis and gluconeogenesis. Consistently, PPi-PFK can replace the enzymes of both the forward (ATP-PFK) and reverse (fructose-bisphosphatase (FBPase)) reactions. This chain is Pyrophosphate--fructose 6-phosphate 1-phosphotransferase, found in Halomonas elongata (strain ATCC 33173 / DSM 2581 / NBRC 15536 / NCIMB 2198 / 1H9).